Reading from the N-terminus, the 398-residue chain is Cystathionine gamma-lyase (398 aa).

A Phosphoserine modification is found at Ser50. Residues Arg61, Tyr113, and Arg118 each contribute to the substrate site. Lys211 carries the post-translational modification N6-(pyridoxal phosphate)lysine. Glu338 is a substrate binding site.

The protein belongs to the trans-sulfuration enzymes family. As to quaternary structure, homotetramer. Interacts with CALM in a calcium-dependent manner. Pyridoxal 5'-phosphate is required as a cofactor.

The protein localises to the cytoplasm. The catalysed reaction is L,L-cystathionine + H2O = 2-oxobutanoate + L-cysteine + NH4(+). It catalyses the reaction L-homoserine = 2-oxobutanoate + NH4(+). It carries out the reaction L-selenocystathionine + H2O = L-selenocysteine + 2-oxobutanoate + NH4(+). The enzyme catalyses L-cysteine + H2O = hydrogen sulfide + pyruvate + NH4(+) + H(+). The catalysed reaction is L-homocysteine + H2O = 2-oxobutanoate + hydrogen sulfide + NH4(+) + H(+). Its pathway is amino-acid biosynthesis; L-cysteine biosynthesis; L-cysteine from L-homocysteine and L-serine: step 2/2. Functionally, catalyzes the last step in the trans-sulfuration pathway from L-methionine to L-cysteine in a pyridoxal-5'-phosphate (PLP)-dependent manner, which consists on cleaving the L,L-cystathionine molecule into L-cysteine, ammonia and 2-oxobutanoate. Part of the L-cysteine derived from the trans-sulfuration pathway is utilized for biosynthesis of the ubiquitous antioxidant glutathione. Besides its role in the conversion of L-cystathionine into L-cysteine, it utilizes L-cysteine and L-homocysteine as substrates (at much lower rates than L,L-cystathionine) to produce hydrogen sulfide (H2S). In vitro, it converts two L-cysteine molecules into lanthionine and H2S, and two L-homocysteine molecules to homolanthionine and H2S, which can be particularly relevant under conditions of severe hyperhomocysteinemia. Lanthionine and homolanthionine are structural homologs of L,L-cystathionine that differ by the absence or presence of an extra methylene group, respectively. Acts as a cysteine-protein sulfhydrase by mediating sulfhydration of target proteins: sulfhydration consists of converting -SH groups into -SSH on specific cysteine residues of target proteins such as GAPDH, PTPN1 and NF-kappa-B subunit RELA, thereby regulating their function. By generating the gasotransmitter H2S, it participates in a number of physiological processes such as vasodilation, bone protection, and inflammation. Plays an essential role in myogenesis by contributing to the biogenesis of H2S in skeletal muscle tissue. Can also accept homoserine as substrate. Catalyzes the elimination of selenocystathionine (which can be derived from the diet) to yield selenocysteine, ammonia and 2-oxobutanoate. In Rattus norvegicus (Rat), this protein is Cystathionine gamma-lyase (Cth).